We begin with the raw amino-acid sequence, 597 residues long: Phragmoplastin interacting protein 1 (597 aa).

Residues 18 to 136 (ESLSVSVSET…KTPKKAEEGN (119 aa)) are disordered. The span at 20 to 29 (LSVSVSETNP) shows a compositional bias: polar residues. A compositionally biased stretch (low complexity) spans 30–40 (QSQSLKLLLDS). Composition is skewed to basic residues over residues 43-53 (HKPRLSKREKR) and 112-129 (QKKK…NKTP). Positions 112–119 (QKKKNKKK) match the Nuclear localization signal motif. RRM domains follow at residues 161-238 (NKLY…QYVK) and 262-338 (NRVY…CALK). 3 CCHC-type zinc fingers span residues 397–411 (CYEC…TACP), 481–495 (CYEC…TACP), and 576–591 (CYEC…ACPN).

Interacts with phragmoplastins (e.g. DRP1A, DRP1B, DRP1C, DRP1D and DRP1E) and with GTP-bound ARAC11/ROP1 as well as with Ran2 transcripts.

The protein localises to the nucleus. It localises to the cell membrane. It is found in the cytoplasm. Its subcellular location is the cytoskeleton. The protein resides in the phragmoplast. Functionally, RNA-binding protein which mediates polarized mRNA (e.g. Ran2 transcripts mRNA) transport from the nucleus to the vicinity of the cell plate during cytokinesis and phragmoplast formation. In Arabidopsis thaliana (Mouse-ear cress), this protein is Phragmoplastin interacting protein 1.